A 306-amino-acid chain; its full sequence is Ribosomal RNA small subunit methyltransferase H (306 aa).

S-adenosyl-L-methionine is bound by residues 33 to 35 (GGY), Asp51, Phe82, Asp96, and Gln103.

It belongs to the methyltransferase superfamily. RsmH family.

It localises to the cytoplasm. It catalyses the reaction cytidine(1402) in 16S rRNA + S-adenosyl-L-methionine = N(4)-methylcytidine(1402) in 16S rRNA + S-adenosyl-L-homocysteine + H(+). In terms of biological role, specifically methylates the N4 position of cytidine in position 1402 (C1402) of 16S rRNA. This chain is Ribosomal RNA small subunit methyltransferase H, found in Rickettsia akari (strain Hartford).